The sequence spans 154 residues: Protein LOL1 (154 aa).

3 putative zinc finger regions span residues 34–64 (QLVC…VTAV), 73–103 (QLVC…VNLA), and 111–141 (HVNC…VTSV).

The protein resides in the nucleus. Its function is as follows. Positive regulator of reactive oxygen-induced cell death. May be involved in the repression of the copper/zinc superoxide dismutase CSD1 and CSD2 that detoxify accumulating superoxide before the reactive oxygen species (ROS) can trigger a cell death cascade. LSD1 and LOL1 have antagonistic effects on CSD1 and CSD2 accumulation to regulate oxidative stress-induced cell death. The polypeptide is Protein LOL1 (LOL1) (Arabidopsis thaliana (Mouse-ear cress)).